The primary structure comprises 141 residues: MQLTSFTDYALRTLIYLASLPKDELTNITEVTDLFGVSRNHMVKVINRLGQLGYVHTVRGKNGGIRLMKAPQEITVGGVVRDLEPLDLVNCSVEFCHITPACRLKEKLAKAKLAFLAELDDCTIEELLSDNSELLILLARP.

Residues 2–129 (QLTSFTDYAL…DDCTIEELLS (128 aa)) form the HTH rrf2-type domain. Positions 28–51 (ITEVTDLFGVSRNHMVKVINRLGQ) form a DNA-binding region, H-T-H motif. The [2Fe-2S] cluster site is built by Cys91, Cys96, and Cys102.

The cofactor is [2Fe-2S] cluster.

In terms of biological role, nitric oxide-sensitive repressor of genes involved in protecting the cell against nitrosative stress. May require iron for activity. This is HTH-type transcriptional repressor NsrR from Vibrio campbellii (strain ATCC BAA-1116).